Reading from the N-terminus, the 160-residue chain is Urease accessory protein UreE (160 aa).

The protein belongs to the UreE family.

The protein localises to the cytoplasm. Involved in urease metallocenter assembly. Binds nickel. Probably functions as a nickel donor during metallocenter assembly. The protein is Urease accessory protein UreE of Acinetobacter baumannii (strain ACICU).